A 147-amino-acid polypeptide reads, in one-letter code: Deoxyuridine 5'-triphosphate nucleotidohydrolase (147 aa).

Residues 68–70, Asn81, and 85–87 each bind substrate; these read RSG and TID.

It belongs to the dUTPase family. It depends on Mg(2+) as a cofactor.

It catalyses the reaction dUTP + H2O = dUMP + diphosphate + H(+). It participates in pyrimidine metabolism; dUMP biosynthesis; dUMP from dCTP (dUTP route): step 2/2. This enzyme is involved in nucleotide metabolism: it produces dUMP, the immediate precursor of thymidine nucleotides and it decreases the intracellular concentration of dUTP so that uracil cannot be incorporated into DNA. In Solibacter usitatus (strain Ellin6076), this protein is Deoxyuridine 5'-triphosphate nucleotidohydrolase.